The chain runs to 40 residues: Biotin carboxylase (40 aa).

The Biotin carboxylation domain occupies 1–40 (ILVANRGEIAVRLLEEAPSPALTPELRITAYLPSGGPFVR). The ATP-grasp domain occupies 13–27 (LLEEAPSPALTPELR).

As to quaternary structure, acetyl-CoA carboxylase is a heterohexamer of biotin carboxyl carrier protein, biotin carboxylase and the two subunits of carboxyl transferase in a 2:2 complex. Mg(2+) is required as a cofactor. The cofactor is Mn(2+).

The enzyme catalyses N(6)-biotinyl-L-lysyl-[protein] + hydrogencarbonate + ATP = N(6)-carboxybiotinyl-L-lysyl-[protein] + ADP + phosphate + H(+). It participates in lipid metabolism; malonyl-CoA biosynthesis; malonyl-CoA from acetyl-CoA: step 1/1. Functionally, this protein is a component of the acetyl coenzyme A carboxylase complex; first, biotin carboxylase catalyzes the carboxylation of the carrier protein and then the transcarboxylase transfers the carboxyl group to form malonyl-CoA. In Populus euphratica (Euphrates poplar), this protein is Biotin carboxylase.